We begin with the raw amino-acid sequence, 244 residues long: Probable transcriptional regulatory protein MMOB1910 (244 aa).

Belongs to the TACO1 family.

The protein resides in the cytoplasm. This chain is Probable transcriptional regulatory protein MMOB1910, found in Mycoplasma mobile (strain ATCC 43663 / 163K / NCTC 11711) (Mesomycoplasma mobile).